Reading from the N-terminus, the 294-residue chain is UDP-3-O-acyl-N-acetylglucosamine deacetylase (294 aa).

3 residues coordinate Zn(2+): histidine 75, histidine 232, and aspartate 236. The Proton donor role is filled by histidine 259.

Belongs to the LpxC family. Zn(2+) is required as a cofactor.

The enzyme catalyses a UDP-3-O-[(3R)-3-hydroxyacyl]-N-acetyl-alpha-D-glucosamine + H2O = a UDP-3-O-[(3R)-3-hydroxyacyl]-alpha-D-glucosamine + acetate. The protein operates within glycolipid biosynthesis; lipid IV(A) biosynthesis; lipid IV(A) from (3R)-3-hydroxytetradecanoyl-[acyl-carrier-protein] and UDP-N-acetyl-alpha-D-glucosamine: step 2/6. In terms of biological role, catalyzes the hydrolysis of UDP-3-O-myristoyl-N-acetylglucosamine to form UDP-3-O-myristoylglucosamine and acetate, the committed step in lipid A biosynthesis. The polypeptide is UDP-3-O-acyl-N-acetylglucosamine deacetylase (Campylobacter fetus subsp. fetus (strain 82-40)).